We begin with the raw amino-acid sequence, 79 residues long: Gas vesicle protein A2 (79 aa).

The segment at 9–19 (LAEVLDRVLDK) is alpha helix 1. A beta-strand 1 region spans residues 23–31 (VDVWARISL). The segment at 32–34 (VGI) is beta turn. The beta-strand 2 stretch occupies residues 35 to 43 (EILTVEARV). Positions 48 to 67 (VDTFLHYAEEIAKIEQAELT) are alpha helix 2.

This sequence belongs to the gas vesicle GvpA family. The gas vesicle shell is 2 nm thick and consists of a single layer of this protein. It forms helical ribs nearly perpendicular to the long axis of the vesicle.

The protein resides in the gas vesicle shell. Functionally, gas vesicles are hollow, gas filled proteinaceous nanostructures found in several microbial planktonic microorganisms. They allow positioning of halobacteria at the optimal depth for growth in the poorly aerated shallow brine pools of their habitat. GvpA forms the gas vesicle shell. This protein can replace the p-gvpA gene in the p-vac locus and increases the critical collapse pressure (CCP) of hybrid gas vesicles from 0.66 MPa to 0.90 MPa. In stationary phase gas vesicles about 30 times more GvpA1 is found than GvpA2. Expression of 2 c-vac DNA fragments containing 2 divergently transcribed regions (gvpE-gvpF-gvpG-gvpH-gvpI-gvpJ-gvpK-gvpL-gvpM and gvpA-gvpC-gvpN-gvpO) allows H.volcanii to produce gas vesicles. All site-directed mutagenesis is tested in H.volcanii. The polypeptide is Gas vesicle protein A2 (Halobacterium salinarum (strain ATCC 700922 / JCM 11081 / NRC-1) (Halobacterium halobium)).